The primary structure comprises 1063 residues: Endo-1,4-beta-xylanase 2 (1063 aa).

CBM-cenC domains follow at residues 5-146 (NIVM…GPAP), 183-313 (NIIK…LEGP), 348-482 (NHIF…IEGP), and 517-662 (NIVS…QGPS). The 296-residue stretch at 711-1006 (SGATVKIRQT…NEAGKRFLEI (296 aa)) folds into the GH10 domain. The active-site Proton donor is the Glu-840. The active-site Nucleophile is Glu-941.

It belongs to the glycosyl hydrolase 10 (cellulase F) family.

The enzyme catalyses Endohydrolysis of (1-&gt;4)-beta-D-xylosidic linkages in xylans.. Its pathway is glycan degradation; xylan degradation. In terms of biological role, binds to and hydrolyzes insoluble and soluble xylan substrates. The polypeptide is Endo-1,4-beta-xylanase 2 (Arabidopsis thaliana (Mouse-ear cress)).